Here is a 273-residue protein sequence, read N- to C-terminus: Phosphate import ATP-binding protein PstB (273 aa).

Positions 17–259 (LSAENLSIFY…DKTNNIFQNP (243 aa)) constitute an ABC transporter domain. 49-56 (GPSGCGKS) serves as a coordination point for ATP.

It belongs to the ABC transporter superfamily. Phosphate importer (TC 3.A.1.7) family. As to quaternary structure, the complex is composed of two ATP-binding proteins (PstB), two transmembrane proteins (PstC and PstA) and a solute-binding protein (PstS).

It localises to the cell inner membrane. The catalysed reaction is phosphate(out) + ATP + H2O = ADP + 2 phosphate(in) + H(+). Functionally, part of the ABC transporter complex PstSACB involved in phosphate import. Responsible for energy coupling to the transport system. The protein is Phosphate import ATP-binding protein PstB of Trichodesmium erythraeum (strain IMS101).